The sequence spans 453 residues: Tyrosine-protein phosphatase non-receptor type 18 (453 aa).

Positions 26 to 291 constitute a Tyrosine-protein phosphatase domain; that stretch reads LAREFSDIKA…RFLYHTVAQL (266 aa). Residues Asp-197, 229–235, and Gln-276 each bind substrate; that span reads CSAGCGR. Cys-229 serves as the catalytic Phosphocysteine intermediate. Tyr-381 and Tyr-419 each carry phosphotyrosine. The interval 384 to 453 is disordered; it reads VAPRAQRPVA…RDPPAEWTRV (70 aa). The segment covering 442 to 453 has biased composition (basic and acidic residues); sequence GPRDPPAEWTRV.

This sequence belongs to the protein-tyrosine phosphatase family. Non-receptor class 4 subfamily. As to quaternary structure, interacts with PSTPIP1. Highest expression in bone marrow. Also expressed in kidney, lung, ovary, spleen, thymus and lymph node.

It is found in the nucleus. The protein localises to the cytoplasm. The enzyme catalyses O-phospho-L-tyrosyl-[protein] + H2O = L-tyrosyl-[protein] + phosphate. Its function is as follows. May be involved in growth and differentiation of hematopoietic cells. The chain is Tyrosine-protein phosphatase non-receptor type 18 (Ptpn18) from Mus musculus (Mouse).